A 495-amino-acid chain; its full sequence is uncharacterized protein (495 aa).

Its subcellular location is the cytoplasm. It localises to the nucleus. This is an uncharacterized protein from Saccharomyces cerevisiae (strain ATCC 204508 / S288c) (Baker's yeast).